The sequence spans 796 residues: ATP-dependent DNA helicase PIF6 (796 aa).

The disordered stretch occupies residues 197-230 (RPTGLPSAHSGGKLPKHMGGDELNPQLEGSTTPG). ATP is bound at residue 255–262 (GSAGTGKT). A DNA-binding region spans residues 636-655 (QAYVALSRVRSREDLMLTAF). 2 disordered regions span residues 692–719 (KGKT…PEEH) and 762–796 (TSSA…VDDD).

The protein belongs to the helicase family. PIF1 subfamily. In terms of assembly, monomer. Mg(2+) serves as cofactor.

It localises to the nucleus. The enzyme catalyses Couples ATP hydrolysis with the unwinding of duplex DNA at the replication fork by translocating in the 5'-3' direction. This creates two antiparallel DNA single strands (ssDNA). The leading ssDNA polymer is the template for DNA polymerase III holoenzyme which synthesizes a continuous strand.. It carries out the reaction ATP + H2O = ADP + phosphate + H(+). Its function is as follows. DNA-dependent ATPase and 5'-3' DNA helicase required for the maintenance of genome stability. The chain is ATP-dependent DNA helicase PIF6 from Trypanosoma brucei brucei (strain 927/4 GUTat10.1).